Reading from the N-terminus, the 436-residue chain is Histone acetyltransferase type B subunit 2 (436 aa).

The segment covering 1-19 has biased composition (acidic residues); that stretch reads MEPYDDGFIEEQEEQEEER. Residues 1 to 22 form a disordered region; it reads MEPYDDGFIEEQEEQEEERTEE. 5 WD repeats span residues 136–176, 187–227, 237–277, 284–324, and 328–368; these read DHKG…SLPT, GHTK…KGNK, HHSS…TTRA, QHRD…TKLH, and CHTD…EEQT. Positions 370 to 374 are interaction with the histone H4 N-terminus; it reads DDAQD. A WD 6 repeat occupies 385–425; sequence GHTNRISDFSWNLNDPWVLCSAAEDNLLQVWKVADAIVGKD.

The protein belongs to the WD repeat RBAP46/RBAP48/MSI1 family. In terms of assembly, component of the HAT-B complex composed of at least hat1 and hat2. The HAT-B complex binds to histone H4 tail.

The protein resides in the cytoplasm. Its subcellular location is the nucleus. In terms of biological role, regulatory subunit of the histone acetylase B (HAT-B) complex. The complex acetylates 'Lys-12' of histone H4 which is required for telomeric silencing. In Aspergillus oryzae (strain ATCC 42149 / RIB 40) (Yellow koji mold), this protein is Histone acetyltransferase type B subunit 2 (hat2).